Consider the following 741-residue polypeptide: 1,4-alpha-glucan branching enzyme GlgB (741 aa).

Catalysis depends on Asp420, which acts as the Nucleophile. The active-site Proton donor is the Glu473.

This sequence belongs to the glycosyl hydrolase 13 family. GlgB subfamily. Monomer.

The enzyme catalyses Transfers a segment of a (1-&gt;4)-alpha-D-glucan chain to a primary hydroxy group in a similar glucan chain.. Its pathway is glycan biosynthesis; glycogen biosynthesis. Functionally, catalyzes the formation of the alpha-1,6-glucosidic linkages in glycogen by scission of a 1,4-alpha-linked oligosaccharide from growing alpha-1,4-glucan chains and the subsequent attachment of the oligosaccharide to the alpha-1,6 position. In Pseudomonas syringae pv. tomato (strain ATCC BAA-871 / DC3000), this protein is 1,4-alpha-glucan branching enzyme GlgB.